Consider the following 300-residue polypeptide: tRNA dimethylallyltransferase (300 aa).

11-18 contacts ATP; that stretch reads GPTAVGKS. 13 to 18 contributes to the substrate binding site; the sequence is TAVGKS. Residues 35-38 form an interaction with substrate tRNA region; that stretch reads DSIQ.

This sequence belongs to the IPP transferase family. In terms of assembly, monomer. It depends on Mg(2+) as a cofactor.

The enzyme catalyses adenosine(37) in tRNA + dimethylallyl diphosphate = N(6)-dimethylallyladenosine(37) in tRNA + diphosphate. Its function is as follows. Catalyzes the transfer of a dimethylallyl group onto the adenine at position 37 in tRNAs that read codons beginning with uridine, leading to the formation of N6-(dimethylallyl)adenosine (i(6)A). In Borrelia recurrentis (strain A1), this protein is tRNA dimethylallyltransferase.